Here is a 315-residue protein sequence, read N- to C-terminus: MIPTIAILSGGFSCEREISLMSGKAVKKALDSLSYNAIEIDVDSNIAEKLKKINPGLAFIALHGPYGEDGCIQGLLEILGIKYTHSGVMASAVAINKVMSKHIFRSLNIDTPKGYVISREDVLKNNIKIDYPYVLKPINEGSSIGVYIIFSHEDYLELKNNSSTIMEKMIVEEYIPGIELHTAVLLDEAIGTIEVRPKNKFYDYEAKYTDGFAEHIFPAKIPDNIYKMTLEHALKIHQFLGCKTISRSDFRYNPKNNTLKMLEINTHPGFTELSLVPEIAKLAKGINFNELVKIIIEDSLQHKNIRDLSHVEQYY.

The 197-residue stretch at 101 to 297 (KHIFRSLNID…FNELVKIIIE (197 aa)) folds into the ATP-grasp domain. Residue 128–181 (KIDYPYVLKPINEGSSIGVYIIFSHEDYLELKNNSSTIMEKMIVEEYIPGIELH) participates in ATP binding. Residues aspartate 249, glutamate 263, and asparagine 265 each contribute to the Mg(2+) site.

Belongs to the D-alanine--D-alanine ligase family. Mg(2+) serves as cofactor. Mn(2+) is required as a cofactor.

Its subcellular location is the cytoplasm. It catalyses the reaction 2 D-alanine + ATP = D-alanyl-D-alanine + ADP + phosphate + H(+). It functions in the pathway cell wall biogenesis; peptidoglycan biosynthesis. Its function is as follows. Cell wall formation. The polypeptide is D-alanine--D-alanine ligase (Wolbachia pipientis wMel).